The following is a 289-amino-acid chain: Secretory carrier-associated membrane protein (289 aa).

The segment at 1–65 (MAGRYDPNPF…TSTDGKKKER (65 aa)) is disordered. At 1-123 (MAGRYDPNPF…EIPIHLRTLQ (123 aa)) the chain is on the cytoplasmic side. The segment covering 16-31 (NPFSNPRSAASATNSR) has biased composition (polar residues). The stretch at 59–98 (DGKKKERDLQAKEAELRKREQEVRRKEEAIARAGIVIEEK) forms a coiled coil. 4 consecutive transmembrane segments (helical) span residues 124-144 (YVAF…VVSV), 156-176 (IWFL…ALWY), 191-211 (FGWF…AAVA), and 239-259 (IFYF…IWVI). Topologically, residues 260-289 (QQVYMHFRGGGKTAEMKREAALGAMGAALR) are cytoplasmic.

It belongs to the SCAMP family.

It is found in the cell membrane. It localises to the cytoplasmic vesicle. The protein localises to the secretory vesicle membrane. In terms of biological role, probably involved in membrane trafficking. The sequence is that of Secretory carrier-associated membrane protein (PSAM2) from Pisum sativum (Garden pea).